We begin with the raw amino-acid sequence, 393 residues long: GDNF family receptor alpha-like (393 aa).

A signal peptide spans 1 to 19; the sequence is MLVFIFLAVTLSSENESSS. At 20-349 the chain is on the extracellular side; it reads QTNDCAHLIQ…LTGFNSFFNG (330 aa). Asn-59, Asn-65, Asn-101, and Asn-115 each carry an N-linked (GlcNAc...) asparagine glycan. 11 disulfides stabilise this stretch: Cys-131–Cys-189, Cys-138–Cys-144, Cys-155–Cys-167, Cys-162–Cys-210, Cys-191–Cys-198, Cys-220–Cys-291, Cys-227–Cys-233, Cys-244–Cys-275, Cys-252–Cys-258, Cys-269–Cys-316, and Cys-293–Cys-304. Residues 149–228 form a required for interaction with GDF15 region; the sequence is ALYLKACSAN…TCLSVIHTCR (80 aa). A helical membrane pass occupies residues 350-370; it reads ELLYVVVCMAVTCGILFLVML. Residues 371–393 lie on the Cytoplasmic side of the membrane; sequence KLRIQSEKRDPSSIEIAGGVIIQ.

This sequence belongs to the GDNFR family. In terms of assembly, interacts (via the extracellular domain) with GDF15 and RET; receptor of GDF15, mediates cellular signaling through interaction with RET after GDF15-binding. Interaction with RET requires previous GDF15-binding. In terms of processing, cleaved and inactivated by MMP14, inhibiting the GDF15-GFRAL aversive response. Expressed in the brainstem, restricted to cells in the area postrema and the immediately adjacent region of the nucleus tractus solitarius.

It localises to the cell membrane. Specifically inhibited by 3P10 monoclonal antibody. Strongly activated by LY3463251, a long-acting and stable agonist composed of GDF15 conjugated monomeric human IgG4 Fc. In terms of biological role, brainstem-restricted receptor for GDF15 hormone, which triggers an aversive response, characterized by nausea, vomiting, and/or loss of appetite in response to various stresses. The aversive response is both required to reduce continuing exposure to those stresses at the time of exposure and to promote avoidance behavior in the future. The GDF15-GFRAL aversive response is triggered by stresses, such as anticancer drugs (camptothecin or cisplatin), cancers or drugs such as metformin. Upon interaction with its ligand, GDF15, mediates the GDF15-induced autophosphorylation and activation of the RET tyrosine kinase receptor, leading to activation of MAPK- and AKT- signaling pathways. Ligand-binding activates GFRAL-expressing neurons localized in the area postrema and nucleus tractus solitarius of the brainstem. The GDF15-GFRAL signal induces expression of genes involved in metabolism, such as lipid metabolism in adipose tissues. The protein is GDNF family receptor alpha-like (Gfral) of Mus musculus (Mouse).